The chain runs to 430 residues: Enolase (430 aa).

Gln167 is a (2R)-2-phosphoglycerate binding site. Residue Glu209 is the Proton donor of the active site. The Mg(2+) site is built by Asp246, Glu287, and Asp314. Positions 339, 368, 369, and 390 each coordinate (2R)-2-phosphoglycerate. Residue Lys339 is the Proton acceptor of the active site.

The protein belongs to the enolase family. It depends on Mg(2+) as a cofactor.

It is found in the cytoplasm. The protein localises to the secreted. The protein resides in the cell surface. It carries out the reaction (2R)-2-phosphoglycerate = phosphoenolpyruvate + H2O. It functions in the pathway carbohydrate degradation; glycolysis; pyruvate from D-glyceraldehyde 3-phosphate: step 4/5. Its function is as follows. Catalyzes the reversible conversion of 2-phosphoglycerate (2-PG) into phosphoenolpyruvate (PEP). It is essential for the degradation of carbohydrates via glycolysis. The sequence is that of Enolase from Prochlorococcus marinus (strain MIT 9301).